The primary structure comprises 557 residues: Vanadium-dependent bromoperoxidase (557 aa).

Residue Gln1 is modified to Pyrrolidone carboxylic acid. The disordered stretch occupies residues 1-22; the sequence is QTCSTSDDADDPTPPNERDDEA. A disulfide bridge links Cys77 with Cys86. Vanadate-binding residues include Lys341 and Arg349. The active site involves His411. Vanadate is bound by residues Ser416, Gly417, and His418. The active site involves His418. Cys441 and Cys462 are disulfide-bonded. The vanadate site is built by Arg480 and His486. A disulfide bond links Cys544 and Cys555.

This sequence belongs to the vanadium-dependent haloperoxidase family. Homodimer; disulfide-linked. It depends on vanadate as a cofactor.

It carries out the reaction RH + Br(-) + H2O2 = RBr + 2 H2O.. Catalyzes the halogenation of organic substrates in the presence of hydrogen peroxide. The protein is Vanadium-dependent bromoperoxidase of Ascophyllum nodosum (Knotted wrack).